A 126-amino-acid polypeptide reads, in one-letter code: Fluoride-specific ion channel FluC 2 (126 aa).

The next 4 membrane-spanning stretches (helical) occupy residues 11 to 31 (VLLI…ICEH), 36 to 56 (LGIL…MYDA), 69 to 89 (AFGT…VQSF), and 93 to 113 (FLPA…GVFF). Na(+)-binding residues include Gly-76 and Thr-79.

The protein belongs to the fluoride channel Fluc/FEX (TC 1.A.43) family.

The protein resides in the cell membrane. It catalyses the reaction fluoride(in) = fluoride(out). Its activity is regulated as follows. Na(+) is not transported, but it plays an essential structural role and its presence is essential for fluoride channel function. Fluoride-specific ion channel. Important for reducing fluoride concentration in the cell, thus reducing its toxicity. The sequence is that of Fluoride-specific ion channel FluC 2 from Methanosarcina mazei (strain ATCC BAA-159 / DSM 3647 / Goe1 / Go1 / JCM 11833 / OCM 88) (Methanosarcina frisia).